Here is a 200-residue protein sequence, read N- to C-terminus: 3-isopropylmalate dehydratase small subunit (200 aa).

Belongs to the LeuD family. LeuD type 1 subfamily. Heterodimer of LeuC and LeuD.

It catalyses the reaction (2R,3S)-3-isopropylmalate = (2S)-2-isopropylmalate. It functions in the pathway amino-acid biosynthesis; L-leucine biosynthesis; L-leucine from 3-methyl-2-oxobutanoate: step 2/4. Its function is as follows. Catalyzes the isomerization between 2-isopropylmalate and 3-isopropylmalate, via the formation of 2-isopropylmaleate. The sequence is that of 3-isopropylmalate dehydratase small subunit from Vibrio vulnificus (strain CMCP6).